A 224-amino-acid chain; its full sequence is Heme response regulator HssR (224 aa).

The region spanning 3–116 is the Response regulatory domain; that stretch reads QCLVVDDDPR…ELIFRIRAVL (114 aa). At aspartate 52 the chain carries 4-aspartylphosphate. Positions 124 to 222 form a DNA-binding region, ompR/PhoB-type; that stretch reads NSEMTIGNLT…VRGQGYKVEN (99 aa).

Phosphorylated by HssS.

It is found in the cytoplasm. Functionally, member of the two-component regulatory system HssS/HssR involved in intracellular heme homeostasis and tempering of staphylococcal virulence. Phosphorylated HssR binds to a direct repeat sequence within hrtAB promoter and activates the expression of hrtAB, an efflux pump, in response to extracellular heme, hemin, hemoglobin or blood. The chain is Heme response regulator HssR (hssR) from Staphylococcus aureus (strain Mu50 / ATCC 700699).